The following is a 339-amino-acid chain: Aspartate carbamoyltransferase catalytic subunit (339 aa).

Residues R59 and T60 each contribute to the carbamoyl phosphate site. Position 87 (K87) interacts with L-aspartate. Carbamoyl phosphate-binding residues include R109, H142, and Q145. R182 and R253 together coordinate L-aspartate. G294 and P295 together coordinate carbamoyl phosphate.

The protein belongs to the aspartate/ornithine carbamoyltransferase superfamily. ATCase family. In terms of assembly, heterododecamer (2C3:3R2) of six catalytic PyrB chains organized as two trimers (C3), and six regulatory PyrI chains organized as three dimers (R2).

The enzyme catalyses carbamoyl phosphate + L-aspartate = N-carbamoyl-L-aspartate + phosphate + H(+). The protein operates within pyrimidine metabolism; UMP biosynthesis via de novo pathway; (S)-dihydroorotate from bicarbonate: step 2/3. In terms of biological role, catalyzes the condensation of carbamoyl phosphate and aspartate to form carbamoyl aspartate and inorganic phosphate, the committed step in the de novo pyrimidine nucleotide biosynthesis pathway. The chain is Aspartate carbamoyltransferase catalytic subunit from Prochlorococcus marinus (strain NATL1A).